A 1221-amino-acid polypeptide reads, in one-letter code: DNA-directed RNA polymerase subunit beta' (1221 aa).

Positions 60, 62, 75, and 78 each coordinate Zn(2+). Aspartate 449, aspartate 451, and aspartate 453 together coordinate Mg(2+). Zn(2+)-binding residues include cysteine 821, cysteine 896, cysteine 903, and cysteine 906.

This sequence belongs to the RNA polymerase beta' chain family. As to quaternary structure, the RNAP catalytic core consists of 2 alpha, 1 beta, 1 beta' and 1 omega subunit. When a sigma factor is associated with the core the holoenzyme is formed, which can initiate transcription. It depends on Mg(2+) as a cofactor. Zn(2+) serves as cofactor.

The catalysed reaction is RNA(n) + a ribonucleoside 5'-triphosphate = RNA(n+1) + diphosphate. Its function is as follows. DNA-dependent RNA polymerase catalyzes the transcription of DNA into RNA using the four ribonucleoside triphosphates as substrates. This Lactobacillus delbrueckii subsp. bulgaricus (strain ATCC BAA-365 / Lb-18) protein is DNA-directed RNA polymerase subunit beta'.